A 302-amino-acid polypeptide reads, in one-letter code: Putative cyclin-D6-1 (302 aa).

It belongs to the cyclin family. Cyclin D subfamily.

This Arabidopsis thaliana (Mouse-ear cress) protein is Putative cyclin-D6-1 (CYCD6-1).